The primary structure comprises 842 residues: Elongation factor 2 (842 aa).

The region spanning 17–253 (SNVRNMSVIA…LWGENYFNPK (237 aa)) is the tr-type G domain. Residues 26–33 (AHVDHGKS), 104–108 (DSPGH), and 158–161 (NKVD) contribute to the GTP site. Residue serine 568 is modified to Phosphoserine. Threonine 574 is modified (phosphothreonine). The residue at position 699 (histidine 699) is a Diphthamide.

It belongs to the TRAFAC class translation factor GTPase superfamily. Classic translation factor GTPase family. EF-G/EF-2 subfamily.

It localises to the cytoplasm. Functionally, catalyzes the GTP-dependent ribosomal translocation step during translation elongation. During this step, the ribosome changes from the pre-translocational (PRE) to the post-translocational (POST) state as the newly formed A-site-bound peptidyl-tRNA and P-site-bound deacylated tRNA move to the P and E sites, respectively. Catalyzes the coordinated movement of the two tRNA molecules, the mRNA and conformational changes in the ribosome. The chain is Elongation factor 2 (eft201) from Schizosaccharomyces pombe (strain 972 / ATCC 24843) (Fission yeast).